The chain runs to 1055 residues: Ubiquitin carboxyl-terminal hydrolase 25 (1055 aa).

Positions 14-57 (QKHQQTFLNQLREITGINDTQILQQALKDSNGNLELAVAFLTAK) constitute a UBA-like domain. The SUMO interaction domain (SIM) stretch occupies residues 77 to 102 (NDRYISVGSQADTNVIDLTGDDKDDL). At Ser85 the chain carries Phosphoserine. Positions 89-95 (TNVIDLT) match the Required for SUMO paralog-specific binding motif. 2 UIM domains span residues 97–116 (DDKD…SNRA) and 123–140 (TDEE…IAEN). A Glycyl lysine isopeptide (Lys-Gly) (interchain with G-Cter in SUMO); alternate cross-link involves residue Lys99. Lys99 is covalently cross-linked (Glycyl lysine isopeptide (Lys-Gly) (interchain with G-Cter in ubiquitin); alternate). Positions 169–657 (VGLKNVGNTC…SAYCLMYIND (489 aa)) constitute a USP domain. Cys178 is a catalytic residue. The segment at 464 to 507 (VCTSPVDDIDASSPPSGSIPSQTLPSTTEQQGALSSELPSTSPS) is disordered. The span at 476-496 (SPPSGSIPSQTLPSTTEQQGA) shows a compositional bias: polar residues. The segment covering 497 to 507 (LSSELPSTSPS) has biased composition (low complexity). A coiled-coil region spans residues 541–578 (TEEELSVLESCLHRWRTEIENDTRDLQESISRIHRTIE). Residues His599 and His607 contribute to the active site. A coiled-coil region spans residues 684-717 (DLRDFVEEDNQRFEKELEEWDAQLAQKALQEKLL). A disordered region spans residues 727–749 (TSVTTAQAAGDPEYLEQPSRSDF). Position 740 is a phosphotyrosine (Tyr740).

The protein belongs to the peptidase C19 family. As to quaternary structure, homotetramer, inhibited form. Homodimer, active form. Interacts with ACTA1 (via its C-terminus); the interaction occurs for all isoforms but is strongest for isoform USP25m in muscle differentiating cells. Interacts (isoform USP25m only) with MYBPC1; the interaction prevents proteasomal degradation of MYBPC1. Interacts (isoform USP25m only) with FLNC (via filament repeats 17-18, 20-21 and 24). Interacts with GAPDH. Interacts with SUMO3; the interaction sumoylates efficiently USP25. Interacts with SUMO2; the interaction sumoylates efficiently USP25. Interacts with SUMO1; the interaction only weakly sumoylates USP25. Interacts with SYK; phosphorylates USP25 and regulates USP25 intracellular levels. Post-translationally, acetylated. In terms of processing, sumoylation impairs binding to and hydrolysis of ubiquitin chains. Sumoylated preferentially with SUMO2 or SUMO3. Desumoylated by SENP1. Polyubiquitinated by SMURF1 by promoting the 'Lys-48'-linkage leading to proteasomal degradation. Preferentially monoubiquitinated but can also be polyubiquitinated. Autodeubiquitinated. Ubiquitination activates the enzymatic activity either by preventing sumoylation or by allowing novel interactions. Post-translationally, phosphorylation in the C-terminal by SYK regulates USP25 cellular levels. In terms of tissue distribution, isoform USP25a is found in most adult and fetal tissues; expression is moderately high in testis, pancreas, kidney, skeletal muscle, liver, lung, placenta, heart, but very low in peripheral blood, colon, small intestine, ovary, prostate, thymus and spleen. Expressed in the brain, with high levels in the cerebral cortex. Isoform USP25b is found in all tissues except heart and skeletal muscle. Isoform USP25m is heart and skeletal muscle specific.

Its subcellular location is the cytoplasm. It localises to the nucleus. The enzyme catalyses Thiol-dependent hydrolysis of ester, thioester, amide, peptide and isopeptide bonds formed by the C-terminal Gly of ubiquitin (a 76-residue protein attached to proteins as an intracellular targeting signal).. Functionally, deubiquitinating enzyme that hydrolyzes ubiquitin moieties conjugated to substrates and thus, functions in various biological processes including inflammation and immune response. Modulates the Wnt/beta-catenin pathway by deubiquitinating and stabilizing tankyrases TNKS1 and TNKS2. Regulates KEAP1-NRF2 axis in the defense against oxidative assaults by deubiquitinating KEAP1 and protecting it from degradation leading to degradation of the NRF2 transcription factor that is responsible for mounting an anti-oxidation gene expression program. Positively regulates RNA virus-induced innate signaling by interacting with and deubiquitinating ERLIN1 and ERLIN2. In turn, restricts virus production by regulating cholesterol biosynthetic flux. Acts as a negative regulator of interleukin-17-mediated signaling and inflammation through the removal of 'Lys-63'-linked ubiquitination of TRAF5 and TRAF6. Prevents the ubiquitination and degradation of TRAF3 to reduce the phosphorylation levels of JNK and P38, the secretion of IL-1B and to induce endotoxin tolerance. The muscle-specific isoform (USP25m) may have a role in the regulation of muscular differentiation and function. This chain is Ubiquitin carboxyl-terminal hydrolase 25 (USP25), found in Homo sapiens (Human).